Here is a 183-residue protein sequence, read N- to C-terminus: Dual-action ribosomal maturation protein DarP (183 aa).

This sequence belongs to the DarP family.

Its subcellular location is the cytoplasm. Member of a network of 50S ribosomal subunit biogenesis factors which assembles along the 30S-50S interface, preventing incorrect 23S rRNA structures from forming. Promotes peptidyl transferase center (PTC) maturation. The protein is Dual-action ribosomal maturation protein DarP of Salmonella paratyphi A (strain ATCC 9150 / SARB42).